The sequence spans 64 residues: Micrurotoxin 1 (64 aa).

Intrachain disulfides connect C3-C24, C6-C11, C17-C41, C45-C57, and C58-C63.

It belongs to the three-finger toxin family. Ancestral subfamily. As to expression, expressed by the venom gland.

The protein resides in the secreted. Its function is as follows. Allosteric modulator of the GABA(A) receptor (GABR), possibly increasing receptor affinity for the agonist, thus enhancing receptor opening and macroscopic desensitization. In vivo, intracerebroventricular injection into mice results in periods of reduced basal activity, followed by bursts of intense seizures and death. The chain is Micrurotoxin 1 from Micrurus mipartitus (Red-tailed coral snake).